The sequence spans 596 residues: Probable protein phosphatase 2C 26 (596 aa).

The segment at 122–154 (SGPLDPAVPFSGPLPAKPPKPASSSSRGFSRRF) is disordered. The PPM-type phosphatase domain maps to 177-584 (LRRDDGVQWA…DDVTVMVISL (408 aa)). 4 residues coordinate Mn(2+): Asp-212, Gly-213, Asp-512, and Asp-575.

It belongs to the PP2C family. The cofactor is Mg(2+). Mn(2+) is required as a cofactor.

The catalysed reaction is O-phospho-L-seryl-[protein] + H2O = L-seryl-[protein] + phosphate. It catalyses the reaction O-phospho-L-threonyl-[protein] + H2O = L-threonyl-[protein] + phosphate. This Oryza sativa subsp. japonica (Rice) protein is Probable protein phosphatase 2C 26.